A 229-amino-acid chain; its full sequence is Octanoyltransferase (229 aa).

Residues Ala-45 to Leu-220 form the BPL/LPL catalytic domain. Substrate-binding positions include Arg-84 to His-91, Ala-151 to Gly-153, and Gly-164 to Ala-166. Cys-182 functions as the Acyl-thioester intermediate in the catalytic mechanism.

This sequence belongs to the LipB family.

It localises to the cytoplasm. The catalysed reaction is octanoyl-[ACP] + L-lysyl-[protein] = N(6)-octanoyl-L-lysyl-[protein] + holo-[ACP] + H(+). Its pathway is protein modification; protein lipoylation via endogenous pathway; protein N(6)-(lipoyl)lysine from octanoyl-[acyl-carrier-protein]: step 1/2. Functionally, catalyzes the transfer of endogenously produced octanoic acid from octanoyl-acyl-carrier-protein onto the lipoyl domains of lipoate-dependent enzymes. Lipoyl-ACP can also act as a substrate although octanoyl-ACP is likely to be the physiological substrate. The chain is Octanoyltransferase from Xylella fastidiosa (strain 9a5c).